Consider the following 99-residue polypeptide: Acylphosphatase (99 aa).

Residues 14–99 (AVDVTVTGRV…DQGLRSFGVR (86 aa)) enclose the Acylphosphatase-like domain. Catalysis depends on residues arginine 29 and asparagine 47.

The protein belongs to the acylphosphatase family.

It catalyses the reaction an acyl phosphate + H2O = a carboxylate + phosphate + H(+). This chain is Acylphosphatase (acyP), found in Nocardioides sp. (strain ATCC BAA-499 / JS614).